A 719-amino-acid chain; its full sequence is ATP-dependent RNA helicase SUV3 homolog, mitochondrial (719 aa).

The transit peptide at 1 to 18 (MRRASGVLRVLGGLTQRC) directs the protein to the mitochondrion. Residues 16-42 (QRCSTSSTPSSSRFPAMNSRRKRNSVR) are disordered. Positions 181-319 (EARSVTRKIF…PAAIDIVKKL (139 aa)) constitute a Helicase ATP-binding domain. 194–201 (GPTNSGKT) lines the ATP pocket. The Helicase C-terminal domain occupies 343 to 499 (KAIESYSNIE…PTYDQIETFS (157 aa)). The tract at residues 662–692 (SKAAGSSKSSEGKRENPSKSEREKPNKRSSI) is disordered. Residues 671–687 (SEGKRENPSKSEREKPN) are compositionally biased toward basic and acidic residues. Residues 693 to 717 (LEALLKRADISEDDLEQLREELNKN) adopt a coiled-coil conformation.

This sequence belongs to the helicase family. Mg(2+) serves as cofactor. Requires Mn(2+) as cofactor.

It is found in the mitochondrion matrix. The protein localises to the nucleus. It catalyses the reaction ATP + H2O = ADP + phosphate + H(+). Its function is as follows. ATPase and DNA/RNA helicase able to unwind DNA/DNA, DNA/RNA and RNA/RNA duplexes in the 5'-3' direction. This Caenorhabditis elegans protein is ATP-dependent RNA helicase SUV3 homolog, mitochondrial.